The primary structure comprises 384 residues: Urea transporter 1 (384 aa).

Phosphoserine is present on Glu-39. Transmembrane regions (helical) follow at residues 61–81 (ISQVVFVSNPISGILILVGLL), 85–105 (PWWALCGCVGTVVSTLTALLL), 111–131 (AIAAGLQGYNATLVGILMAVF), 138–158 (FWWLIFPVSAMSMTCPVFSSA), and 168–188 (LPVFTLPFNMALSMYLSATGH). Asn-206 is a glycosylation site (N-linked (GlcNAc...) asparagine). A run of 4 helical transmembrane segments spans residues 250-270 (LMCLHAAIGSLLGVIAGLSLA), 276-296 (IYFGLWGFNSSLACIAIGGMF), 305-325 (LLALACALFTAYFGACMAHLM), and 327-347 (VVHLPACTWSFCLATLLFLLL).

This sequence belongs to the urea transporter family. In terms of assembly, homotrimer; each subunit contains a pore through which urea permeates. Identified in a complex with STOM. In terms of processing, N-glycosylated in red blood cells, as well as in most non-erythroid tissues, except in the gastrocnemius muscle and in the gastrointestinal tract, including liver, colon and stomach. As to expression, expressed in brain, kidney, heart, liver, lung, skeletal muscle, spleen, testis, ureter and urinary bladder (at protein level). Along the gastrointestinal tract, detected in colon, jejunum and stomach (at protein level). In the kidney, expressed in some microvessels of the inner and outer medulla, but not all (at protein level). Not detected in the cortex (at protein level). Detected in the urothelium all along the urinary tract, including the papilla surface, the ureter, the bladder and the urethra (at protein level). In the brain, expressed at the border of the corpus callosum and striatum in astrocytic cellular processes surrounding blood microvessels (at protein level). Detected in erythrocytes (at protein level).

It localises to the cell membrane. It is found in the basolateral cell membrane. It catalyses the reaction urea(in) = urea(out). Functionally, mediates the transport of urea driven by a concentration gradient across the cell membranes of erythrocytes and the renal inner medullary collecting duct which is critical to the urinary concentrating mechanism. Facilitates water transport in erythrocytes. This is Urea transporter 1 (Slc14a1) from Mus musculus (Mouse).